The chain runs to 462 residues: Chitinase-like mite allergen Der p 18.0101 (462 aa).

An N-terminal signal peptide occupies residues 1–25; the sequence is MTRLSFTVLIFLAAYFGSNIRPNVA. Residues 29–378 enclose the GH18 domain; sequence PKTVCYYESW…HAINSNYFRG (350 aa). The cysteines at positions 33 and 58 are disulfide-linked. N-linked (GlcNAc...) asparagine glycosylation is found at asparagine 338 and asparagine 441. The Chitin-binding type-2 domain maps to 404-462; that stretch reads VFHCHQEGFFRDKTYCAKYYECKKGDFGLEQTVHHCPNHSQAFDEVSRTCVDHAKIPGC. Cysteines 439 and 453 form a disulfide.

The protein belongs to the glycosyl hydrolase 18 family. Chitinase class II subfamily. As to expression, expressed in the peritrophic matrix of the midgut, and only very weakly in fecal pellets.

The protein localises to the secreted. In terms of biological role, probably a non-catalytic chitinase-like protein, which binds to insoluble chitin and enhances the activity of the catalytic chitinases. Has weak chitin-binding activity. This is Chitinase-like mite allergen Der p 18.0101 from Dermatophagoides pteronyssinus (European house dust mite).